We begin with the raw amino-acid sequence, 470 residues long: Poly(A) polymerase catalytic subunit (470 aa).

Residues Asp192 and Asp194 contribute to the active site.

It belongs to the poxviridae poly(A) polymerase catalytic subunit family. Heterodimer of a large (catalytic) subunit and a small (regulatory) subunit.

The enzyme catalyses RNA(n) + ATP = RNA(n)-3'-adenine ribonucleotide + diphosphate. In terms of biological role, polymerase that creates the 3'-poly(A) tail of mRNA's. This is Poly(A) polymerase catalytic subunit (PAPL) from Myxoma virus (strain Lausanne) (MYXV).